The primary structure comprises 102 residues: Small ribosomal subunit protein uS10 (102 aa).

This sequence belongs to the universal ribosomal protein uS10 family. Part of the 30S ribosomal subunit.

Its function is as follows. Involved in the binding of tRNA to the ribosomes. The sequence is that of Small ribosomal subunit protein uS10 from Ligilactobacillus salivarius (strain UCC118) (Lactobacillus salivarius).